The chain runs to 1197 residues: ATP-dependent helicase/nuclease subunit A (1197 aa).

In terms of domain architecture, UvrD-like helicase ATP-binding spans 2–458; the sequence is RQWTKEQQAA…IDLAKNFRSR (457 aa). An ATP-binding site is contributed by 23–30; sequence AAAGSGKT. The 290-residue stretch at 485–774 folds into the UvrD-like helicase C-terminal domain; the sequence is RAALYQGTEF…RIMSIHKSKG (290 aa).

It belongs to the helicase family. AddA subfamily. Heterodimer of AddA and AddB/RexB. Mg(2+) is required as a cofactor.

The catalysed reaction is Couples ATP hydrolysis with the unwinding of duplex DNA by translocating in the 3'-5' direction.. It carries out the reaction ATP + H2O = ADP + phosphate + H(+). The heterodimer acts as both an ATP-dependent DNA helicase and an ATP-dependent, dual-direction single-stranded exonuclease. Recognizes the chi site generating a DNA molecule suitable for the initiation of homologous recombination. The AddA nuclease domain is required for chi fragment generation; this subunit has the helicase and 3' -&gt; 5' nuclease activities. The sequence is that of ATP-dependent helicase/nuclease subunit A from Alkaliphilus oremlandii (strain OhILAs) (Clostridium oremlandii (strain OhILAs)).